Reading from the N-terminus, the 271-residue chain is Putative F-box protein L165 (271 aa).

The F-box domain occupies 4–49; sequence ICELFDDVILEIMNLLSDTDKINFMFCCSRFYYFIDLVYYNDIYDY. The segment at 251–271 is disordered; sequence NIPKIVPKNTHYRNSSKKYRY. Residues 260–271 are compositionally biased toward basic residues; the sequence is THYRNSSKKYRY.

The sequence is that of Putative F-box protein L165 from Acanthamoeba polyphaga mimivirus (APMV).